The primary structure comprises 298 residues: Probable pyridoxal 5'-phosphate synthase subunit SNZ2 (298 aa).

Aspartate 21 contributes to the D-ribose 5-phosphate binding site. Catalysis depends on lysine 78, which acts as the Schiff-base intermediate with D-ribose 5-phosphate. Residues glycine 150, glycine 213, and 234–235 (GS) contribute to the D-ribose 5-phosphate site.

Belongs to the PdxS/SNZ family. As to quaternary structure, homohexamer. Interacts with THI11.

The enzyme catalyses aldehydo-D-ribose 5-phosphate + D-glyceraldehyde 3-phosphate + L-glutamine = pyridoxal 5'-phosphate + L-glutamate + phosphate + 3 H2O + H(+). It functions in the pathway cofactor biosynthesis; pyridoxal 5'-phosphate biosynthesis. Catalyzes the formation of pyridoxal 5'-phosphate from ribose 5-phosphate (RBP), glyceraldehyde 3-phosphate (G3P) and ammonia. The ammonia is provided by a SNO isoform. Can also use ribulose 5-phosphate and dihydroxyacetone phosphate as substrates, resulting from enzyme-catalyzed isomerization of RBP and G3P, respectively. This chain is Probable pyridoxal 5'-phosphate synthase subunit SNZ2 (SNZ2), found in Saccharomyces cerevisiae (strain ATCC 204508 / S288c) (Baker's yeast).